The chain runs to 137 residues: Large ribosomal subunit protein uL16 (137 aa).

The protein belongs to the universal ribosomal protein uL16 family. As to quaternary structure, part of the 50S ribosomal subunit.

Its function is as follows. Binds 23S rRNA and is also seen to make contacts with the A and possibly P site tRNAs. This is Large ribosomal subunit protein uL16 from Hydrogenovibrio crunogenus (strain DSM 25203 / XCL-2) (Thiomicrospira crunogena).